A 282-amino-acid chain; its full sequence is 3-methyl-2-oxobutanoate hydroxymethyltransferase (282 aa).

Mg(2+) contacts are provided by aspartate 46 and aspartate 85. 3-methyl-2-oxobutanoate is bound by residues 46–47, aspartate 85, and lysine 115; that span reads DS. Residue glutamate 117 coordinates Mg(2+). Catalysis depends on glutamate 184, which acts as the Proton acceptor.

Belongs to the PanB family. As to quaternary structure, homodecamer; pentamer of dimers. It depends on Mg(2+) as a cofactor.

The protein resides in the cytoplasm. It carries out the reaction 3-methyl-2-oxobutanoate + (6R)-5,10-methylene-5,6,7,8-tetrahydrofolate + H2O = 2-dehydropantoate + (6S)-5,6,7,8-tetrahydrofolate. The protein operates within cofactor biosynthesis; (R)-pantothenate biosynthesis; (R)-pantoate from 3-methyl-2-oxobutanoate: step 1/2. In terms of biological role, catalyzes the reversible reaction in which hydroxymethyl group from 5,10-methylenetetrahydrofolate is transferred onto alpha-ketoisovalerate to form ketopantoate. The polypeptide is 3-methyl-2-oxobutanoate hydroxymethyltransferase (Alkaliphilus metalliredigens (strain QYMF)).